The sequence spans 971 residues: Exportin-2 (971 aa).

An N-acetylmethionine modification is found at Met-1. In terms of domain architecture, Importin N-terminal spans 29 to 102 (AEKFLESVEG…KANIVHLMLS (74 aa)). Ser-112 carries the phosphoserine modification. An N6-acetyllysine mark is found at Lys-574 and Lys-824. Ser-931 carries the phosphoserine modification.

The protein belongs to the XPO2/CSE1 family. As to quaternary structure, found in a complex with CSE1L/XPO2, Ran and KPNA2. Binds with high affinity to importin-alpha only in the presence of RanGTP. The complex is dissociated by the combined action of RanBP1 and RanGAP1. Interacts with CFTR.

The protein resides in the cytoplasm. The protein localises to the nucleus. Export receptor for importin-alpha. Mediates importin-alpha re-export from the nucleus to the cytoplasm after import substrates (cargos) have been released into the nucleoplasm. In the nucleus binds cooperatively to importin-alpha and to the GTPase Ran in its active GTP-bound form. Docking of this trimeric complex to the nuclear pore complex (NPC) is mediated through binding to nucleoporins. Upon transit of a nuclear export complex into the cytoplasm, disassembling of the complex and hydrolysis of Ran-GTP to Ran-GDP (induced by RANBP1 and RANGAP1, respectively) cause release of the importin-alpha from the export receptor. CSE1L/XPO2 then return to the nuclear compartment and mediate another round of transport. The directionality of nuclear export is thought to be conferred by an asymmetric distribution of the GTP- and GDP-bound forms of Ran between the cytoplasm and nucleus. In Pongo abelii (Sumatran orangutan), this protein is Exportin-2 (CSE1L).